The primary structure comprises 121 residues: Large ribosomal subunit protein uL22 (121 aa).

Belongs to the universal ribosomal protein uL22 family. As to quaternary structure, part of the 50S ribosomal subunit.

In terms of biological role, this protein binds specifically to 23S rRNA; its binding is stimulated by other ribosomal proteins, e.g. L4, L17, and L20. It is important during the early stages of 50S assembly. It makes multiple contacts with different domains of the 23S rRNA in the assembled 50S subunit and ribosome. Functionally, the globular domain of the protein is located near the polypeptide exit tunnel on the outside of the subunit, while an extended beta-hairpin is found that lines the wall of the exit tunnel in the center of the 70S ribosome. The chain is Large ribosomal subunit protein uL22 from Synechococcus sp. (strain CC9311).